A 155-amino-acid polypeptide reads, in one-letter code: Sperm microtubule associated protein 1 (155 aa).

This is Sperm microtubule associated protein 1 (Spmap1) from Mus musculus (Mouse).